The primary structure comprises 249 residues: Diaminopimelate epimerase (249 aa).

Substrate-binding residues include asparagine 11 and asparagine 60. The Proton donor role is filled by cysteine 69. Residues 70–71, asparagine 164, and 182–183 each bind substrate; these read GN and ER. Catalysis depends on cysteine 192, which acts as the Proton acceptor. 193–194 serves as a coordination point for substrate; that stretch reads GT.

Belongs to the diaminopimelate epimerase family. Homodimer.

It localises to the cytoplasm. It catalyses the reaction (2S,6S)-2,6-diaminopimelate = meso-2,6-diaminopimelate. It participates in amino-acid biosynthesis; L-lysine biosynthesis via DAP pathway; DL-2,6-diaminopimelate from LL-2,6-diaminopimelate: step 1/1. In terms of biological role, catalyzes the stereoinversion of LL-2,6-diaminopimelate (L,L-DAP) to meso-diaminopimelate (meso-DAP), a precursor of L-lysine and an essential component of the bacterial peptidoglycan. In Campylobacter jejuni (strain RM1221), this protein is Diaminopimelate epimerase.